Reading from the N-terminus, the 370-residue chain is Phosphate acyltransferase (370 aa).

The interval 349 to 370 (SAGRAGQDAPDEMAAPGRSEKR) is disordered.

Belongs to the PlsX family. As to quaternary structure, homodimer. Probably interacts with PlsY.

The protein resides in the cytoplasm. It catalyses the reaction a fatty acyl-[ACP] + phosphate = an acyl phosphate + holo-[ACP]. The protein operates within lipid metabolism; phospholipid metabolism. Functionally, catalyzes the reversible formation of acyl-phosphate (acyl-PO(4)) from acyl-[acyl-carrier-protein] (acyl-ACP). This enzyme utilizes acyl-ACP as fatty acyl donor, but not acyl-CoA. The chain is Phosphate acyltransferase from Cereibacter sphaeroides (strain ATCC 17029 / ATH 2.4.9) (Rhodobacter sphaeroides).